The primary structure comprises 509 residues: Cardiolipin synthase 1 (509 aa).

Helical transmembrane passes span 4 to 24 (PIIQ…LLNT), 30 to 50 (YTFV…VIFI), and 59 to 79 (LAWF…YSIF). 2 PLD phosphodiesterase domains span residues 238 to 265 (VNYR…GDEY) and 422 to 449 (KDGF…DVRS). Active-site residues include His243, Lys245, Asp250, His427, Lys429, and Asp434.

The protein belongs to the phospholipase D family. Cardiolipin synthase subfamily.

It is found in the cell membrane. It carries out the reaction 2 a 1,2-diacyl-sn-glycero-3-phospho-(1'-sn-glycerol) = a cardiolipin + glycerol. Catalyzes the reversible phosphatidyl group transfer from one phosphatidylglycerol molecule to another to form cardiolipin (CL) (diphosphatidylglycerol) and glycerol. In Bacillus anthracis, this protein is Cardiolipin synthase 1 (cls1).